The following is a 103-amino-acid chain: Large ribosomal subunit protein bL21 (103 aa).

It belongs to the bacterial ribosomal protein bL21 family. As to quaternary structure, part of the 50S ribosomal subunit. Contacts protein L20.

Its function is as follows. This protein binds to 23S rRNA in the presence of protein L20. The polypeptide is Large ribosomal subunit protein bL21 (Pseudomonas syringae pv. tomato (strain ATCC BAA-871 / DC3000)).